A 77-amino-acid polypeptide reads, in one-letter code: Large ribosomal subunit protein uL24c (77 aa).

This sequence belongs to the universal ribosomal protein uL24 family. In terms of assembly, part of the 50S ribosomal subunit.

Its subcellular location is the plastid. It is found in the chloroplast. One of two assembly initiator proteins, it binds directly to the 5'-end of the 23S rRNA, where it nucleates assembly of the 50S subunit. The sequence is that of Large ribosomal subunit protein uL24c (rpl24) from Trieres chinensis (Marine centric diatom).